Consider the following 348-residue polypeptide: MENLDQIVSEAQVAFAAISDPDALEQVKARFLGKSGQITELLKGLGKLPPEEKKTAGAAINVAKTAVETALNERREAIRKAALDARLAEEALDVTLPGRAEARGGLHPVTRTLERIESLFASIGFEVADGPEIEEDFYNFTAMNTPEDHPARSMHDTFYLQNSDGTLADKVLLRTHTSPIQARYMQAHVKRYGQLGKMPEIRIIAPGRVYRVDSDATHSPMFHQVEGLWVGEGVSFADLKGVIANFLKSFFETDDLTVRFRPSFFPFTEPSAEIDVAFMSGALKGRWLEIAGCGMVHPNVLRIAGIDPEKYTGFAFGFGQDRLTMLRYGINDLRLFFEGDLRFLRQFN.

Glutamate 269 contributes to the Mg(2+) binding site.

It belongs to the class-II aminoacyl-tRNA synthetase family. Phe-tRNA synthetase alpha subunit type 1 subfamily. Tetramer of two alpha and two beta subunits. It depends on Mg(2+) as a cofactor.

It localises to the cytoplasm. It carries out the reaction tRNA(Phe) + L-phenylalanine + ATP = L-phenylalanyl-tRNA(Phe) + AMP + diphosphate + H(+). The protein is Phenylalanine--tRNA ligase alpha subunit of Dechloromonas aromatica (strain RCB).